The primary structure comprises 674 residues: Dystrophia myotonica WD repeat-containing protein (674 aa).

Ala2 is modified (N-acetylalanine). Disordered stretches follow at residues 31–92 (GFYK…PALP) and 103–122 (EPDS…LGSG). Positions 53 to 65 (PVPPQPPQPPPGP) are enriched in pro residues. Positions 66 to 77 (ASASGPGAAGPA) are enriched in low complexity. Over residues 78–90 (SSPPPAGPGPGPA) the composition is skewed to pro residues. Positions 107–118 (AGAGEPPATPAG) are enriched in low complexity. WD repeat units follow at residues 211-251 (IDKT…ASAP), 282-321 (VGEG…LRGL), 324-363 (SYFG…VVAR), 366-409 (GHKS…EAAG), and 413-453 (AGGA…LYPH). Disordered stretches follow at residues 384–419 (EEAA…APLS), 456–516 (LART…EPGT), 532–573 (RDRG…RSRL), and 637–674 (DEET…GTVV). Low complexity-rich tracts occupy residues 457 to 478 (ARTR…SSRG) and 487 to 499 (PRSL…LPHP). Ser495 is modified (phosphoserine). Composition is skewed to gly residues over residues 500–509 (AGGGKAGGPG) and 550–563 (SRGG…GGEK). Arg551 carries the omega-N-methylarginine modification. The stretch at 601-638 (IAQERLTVLLFLEDCIITACQEGLICTWARPGKAFTDE) is one WD 6 repeat. Over residues 642–674 (AQTGEGSWPRSPSKSVVEGISSQPGNSPSGTVV) the composition is skewed to polar residues.

As to quaternary structure, component of the USP12/DMWD/WDR48 deubiquitinating complex. Interacts with USP12; promotes its enzymatic activity. Interacts with USP46.

It is found in the cytoplasm. Its subcellular location is the nucleus. The protein resides in the perikaryon. It localises to the cell projection. The protein localises to the dendrite. In terms of biological role, regulator of the deubiquitinating USP12/DMWD/WDR48 complex. Functions as a cofactor that promotes USP12 enzymatic activity. This chain is Dystrophia myotonica WD repeat-containing protein, found in Homo sapiens (Human).